We begin with the raw amino-acid sequence, 30 residues long: Cycloviolacin-O7 (30 aa).

The segment at residues 1-30 (SIPCGESCVWIPCTITALAGCKCKSKVCYN) is a cross-link (cyclopeptide (Ser-Asn)). Cystine bridges form between cysteine 4–cysteine 21, cysteine 8–cysteine 23, and cysteine 13–cysteine 28.

This is a cyclic peptide.

In terms of biological role, probably participates in a plant defense mechanism. The sequence is that of Cycloviolacin-O7 from Viola odorata (Sweet violet).